The sequence spans 565 residues: MAQRIFTLILLLCSTSVFAGLFDAPGRSQFVPVDQAFAFDFQQNQHDLNLTWQIKDGYYLYRKQIRITPEHAKIADVQLPQGVWHEDEFYGKSEIYRDRLTLPVTINQASAGATLTVTYQGCADAGFCYPPETKTVPLSEVVANNAASQPVSVPQQEQPTAQLPFSALWALLIGIGIAFTPCVLPMYPLISGIVLGGKQRLSTARALLLTFIYVQGMALTYTALGLVVAAAGLQFQAALQHPYVLIGLTIVFTLLAMSMFGLLTLQLPSSLQTRLTLMSNRQQGGSPGGVFIMGTIAGLICSPCTTAPLSAILLYIAQSGNMWLGGGTLYLYALGMGLPLMLITVFGNRLLPKSGPWMEQVKTAFGFVILALPVFLLERVIGDVWGLRLWSALGVAFFGWAFITSLQAKRGWMRVVQIILLAAALVSVRPLQDWAFGATHTAQTQTHLNFTQIKTVDELNQALVEAKGKPVMLDLYADWCVACKEFEKYTFSDPQVQKALADTVLLQANVTANDAQDVALLKHLNVLGLPTILFFDGQGQEHPQARVTGFMDAETFSAHLRDRQP.

An N-terminal signal peptide occupies residues 1–19 (MAQRIFTLILLLCSTSVFA). The Periplasmic portion of the chain corresponds to 20 to 162 (GLFDAPGRSQ…VPQQEQPTAQ (143 aa)). Cystine bridges form between Cys122/Cys128 and Cys182/Cys304. The helical transmembrane segment at 163-183 (LPFSALWALLIGIGIAFTPCV) threads the bilayer. Residues 184–207 (LPMYPLISGIVLGGKQRLSTARAL) lie on the Cytoplasmic side of the membrane. A helical membrane pass occupies residues 208–228 (LLTFIYVQGMALTYTALGLVV). The Periplasmic segment spans residues 229–242 (AAAGLQFQAALQHP). A helical membrane pass occupies residues 243-263 (YVLIGLTIVFTLLAMSMFGLL). Residues 264–295 (TLQLPSSLQTRLTLMSNRQQGGSPGGVFIMGT) are Cytoplasmic-facing. Residues 296–316 (IAGLICSPCTTAPLSAILLYI) traverse the membrane as a helical segment. Residues 317-322 (AQSGNM) lie on the Periplasmic side of the membrane. Residues 323 to 343 (WLGGGTLYLYALGMGLPLMLI) form a helical membrane-spanning segment. Topologically, residues 344 to 356 (TVFGNRLLPKSGP) are cytoplasmic. Residues 357–377 (WMEQVKTAFGFVILALPVFLL) traverse the membrane as a helical segment. Residues 378–383 (ERVIGD) are Periplasmic-facing. The chain crosses the membrane as a helical span at residues 384–404 (VWGLRLWSALGVAFFGWAFIT). Residues 405-417 (SLQAKRGWMRVVQ) are Cytoplasmic-facing. Residues 418 to 438 (IILLAAALVSVRPLQDWAFGA) traverse the membrane as a helical segment. Residues 434–565 (WAFGATHTAQ…FSAHLRDRQP (132 aa)) enclose the Thioredoxin domain. Over 439–565 (THTAQTQTHL…FSAHLRDRQP (127 aa)) the chain is Periplasmic. Cys480 and Cys483 form a disulfide bridge.

This sequence belongs to the thioredoxin family. DsbD subfamily.

Its subcellular location is the cell inner membrane. It carries out the reaction [protein]-dithiol + NAD(+) = [protein]-disulfide + NADH + H(+). The catalysed reaction is [protein]-dithiol + NADP(+) = [protein]-disulfide + NADPH + H(+). Its function is as follows. Required to facilitate the formation of correct disulfide bonds in some periplasmic proteins and for the assembly of the periplasmic c-type cytochromes. Acts by transferring electrons from cytoplasmic thioredoxin to the periplasm. This transfer involves a cascade of disulfide bond formation and reduction steps. The protein is Thiol:disulfide interchange protein DsbD of Escherichia coli O157:H7.